Reading from the N-terminus, the 138-residue chain is Large ribosomal subunit protein uL13 (138 aa).

This sequence belongs to the universal ribosomal protein uL13 family. In terms of assembly, part of the 50S ribosomal subunit.

Functionally, this protein is one of the early assembly proteins of the 50S ribosomal subunit, although it is not seen to bind rRNA by itself. It is important during the early stages of 50S assembly. The chain is Large ribosomal subunit protein uL13 from Picrophilus torridus (strain ATCC 700027 / DSM 9790 / JCM 10055 / NBRC 100828 / KAW 2/3).